Reading from the N-terminus, the 329-residue chain is GTP 3',8-cyclase (329 aa).

A Radical SAM core domain is found at 8–234 (AFARKFYYLR…QLRQRSDGPA (227 aa)). Residue R17 participates in GTP binding. Positions 24 and 28 each coordinate [4Fe-4S] cluster. An S-adenosyl-L-methionine-binding site is contributed by Y30. A [4Fe-4S] cluster-binding site is contributed by C31. R68 contributes to the GTP binding site. G72 lines the S-adenosyl-L-methionine pocket. T99 serves as a coordination point for GTP. Position 123 (S123) interacts with S-adenosyl-L-methionine. K160 contacts GTP. M194 provides a ligand contact to S-adenosyl-L-methionine. [4Fe-4S] cluster contacts are provided by C257 and C260. 262-264 (RLR) serves as a coordination point for GTP. C274 is a [4Fe-4S] cluster binding site.

It belongs to the radical SAM superfamily. MoaA family. In terms of assembly, monomer and homodimer. It depends on [4Fe-4S] cluster as a cofactor.

It carries out the reaction GTP + AH2 + S-adenosyl-L-methionine = (8S)-3',8-cyclo-7,8-dihydroguanosine 5'-triphosphate + 5'-deoxyadenosine + L-methionine + A + H(+). It functions in the pathway cofactor biosynthesis; molybdopterin biosynthesis. Its function is as follows. Catalyzes the cyclization of GTP to (8S)-3',8-cyclo-7,8-dihydroguanosine 5'-triphosphate. This is GTP 3',8-cyclase from Salmonella newport (strain SL254).